We begin with the raw amino-acid sequence, 493 residues long: Galactose-1-phosphate uridylyltransferase (493 aa).

It belongs to the galactose-1-phosphate uridylyltransferase type 2 family.

It localises to the cytoplasm. It catalyses the reaction alpha-D-galactose 1-phosphate + UDP-alpha-D-glucose = alpha-D-glucose 1-phosphate + UDP-alpha-D-galactose. It functions in the pathway carbohydrate metabolism; galactose metabolism. The sequence is that of Galactose-1-phosphate uridylyltransferase (galT) from Streptococcus thermophilus.